Here is an 834-residue protein sequence, read N- to C-terminus: U-box domain-containing protein 33 (834 aa).

The interval 232–308 is disordered; it reads FSTPESEHQH…SPSSFPDGVD (77 aa). Composition is skewed to polar residues over residues 243 to 273 and 284 to 293; these read SRVQ…GSLN and SEVTGSATVM. Residues 334 to 462 adopt a coiled-coil conformation; it reads LRRQKAEKNA…SHAETSTLQL (129 aa). Residues 481-744 form the Protein kinase domain; it reads FDSTLKIGEG…EVWRVLEPMR (264 aa). Residues 487-495 and Lys-508 contribute to the ATP site; that span reads IGEGGYGSI. Catalysis depends on Asp-603, which acts as the Proton acceptor. Positions 762–834 constitute a U-box domain; the sequence is IAPPYFICPI…AIQEWLQHHL (73 aa).

This sequence belongs to the protein kinase superfamily. Ser/Thr protein kinase family.

The enzyme catalyses L-seryl-[protein] + ATP = O-phospho-L-seryl-[protein] + ADP + H(+). The catalysed reaction is L-threonyl-[protein] + ATP = O-phospho-L-threonyl-[protein] + ADP + H(+). It carries out the reaction S-ubiquitinyl-[E2 ubiquitin-conjugating enzyme]-L-cysteine + [acceptor protein]-L-lysine = [E2 ubiquitin-conjugating enzyme]-L-cysteine + N(6)-ubiquitinyl-[acceptor protein]-L-lysine.. Its pathway is protein modification; protein ubiquitination. In terms of biological role, functions as an E3 ubiquitin ligase. The polypeptide is U-box domain-containing protein 33 (PUB33) (Arabidopsis thaliana (Mouse-ear cress)).